Reading from the N-terminus, the 206-residue chain is Synaptosomal-associated protein 25 (206 aa).

Residues 1 to 20 (MAEDADMRNELEEMQRRADQ) show a composition bias toward basic and acidic residues. The segment at 1-23 (MAEDADMRNELEEMQRRADQLAD) is disordered. The region spanning 19–81 (DQLADESLES…KEAEKNLTDL (63 aa)) is the t-SNARE coiled-coil homology 1 domain. 4 S-palmitoyl cysteine lipidation sites follow: Cys85, Cys88, Cys90, and Cys92. The residue at position 138 (Thr138) is a Phosphothreonine. One can recognise a t-SNARE coiled-coil homology 2 domain in the interval 140–202 (DARENEMDEN…DEANQRATKM (63 aa)). Ser187 bears the Phosphoserine mark.

Belongs to the SNAP-25 family. Part of the SNARE core complex containing SNAP25, VAMP2 and STX1A. This complex binds CPLX1. Interacts with TRIM9, RIMS1 and SNAPIN. Binds STXBP6. Found in a ternary complex with STX1A and VAMP8. Associates with the BLOC-1 complex. Isoform 1 and isoform 2 interact with BLOC1S6. Interacts with alpha-synuclein/SNCA. Palmitoylated. Cys-85 appears to be the main site, and palmitoylation is required for membrane association.

The protein localises to the membrane. Its subcellular location is the synapse. It localises to the synaptosome. It is found in the cell membrane. T-SNARE involved in the molecular regulation of neurotransmitter release. May play an important role in the synaptic function of specific neuronal systems. Associates with proteins involved in vesicle docking and membrane fusion. This is Synaptosomal-associated protein 25 (SNAP25) from Gallus gallus (Chicken).